Here is a 74-residue protein sequence, read N- to C-terminus: Mu-conotoxin-like T3.1 (74 aa).

An N-terminal signal peptide occupies residues 1–19 (MSKLGVLLTICLLLFPLTA). The propeptide occupies 20 to 74 (LPMDGDEPADRPAERMQDNISSEQHPLFEERHGCCKGPEGCSSRECRPQHCCGRR). Cystine bridges form between C53–C65, C54–C70, and C60–C71. The residue at position 57 (P57) is a 4-hydroxyproline. 2 positions are modified to 4-carboxyglutamate: E58 and E64. Position 67 is a 4-hydroxyproline (P67). C71 carries the post-translational modification Cysteine amide.

This sequence belongs to the conotoxin M superfamily. As to expression, expressed by the venom duct.

Its subcellular location is the secreted. In terms of biological role, mu-conotoxins block voltage-gated sodium channels (Nav). In vitro, this synthetic peptide displays a low blocking effect in mouse extensor digitorum longus muscles (IC(50)=616 nM). In Conus tulipa (Fish-hunting cone snail), this protein is Mu-conotoxin-like T3.1.